The sequence spans 369 residues: Biglycan (369 aa).

The signal sequence occupies residues 1–16 (MRPLWLLTLLLALSQA). Positions 17–37 (LPFEQKGFWDFTLDDGLLMMN) are excised as a propeptide. 2 O-linked (Xyl...) (glycosaminoglycan) serine glycosylation sites follow: Ser42 and Ser48. Cystine bridges form between Cys64-Cys70 and Cys68-Cys77. LRR repeat units lie at residues 83–103 (KTVP…NNDI), 104–127 (SELR…NNKI), 128–151 (SKIH…KNHL), 152–172 (VEIP…DNRI), 173–196 (RKVP…GNPL), 197–221 (ENSG…EAKL), 222–242 (TGIP…HNKI), 243–266 (QAIE…HNQI), 267–290 (RMIE…NNKL), 291–313 (SRVP…SNNI), 314–343 (TKVG…NNPV), and 344–369 (PYWE…NYKK). 2 N-linked (GlcNAc...) asparagine glycosylation sites follow: Asn271 and Asn312. The cysteines at positions 322 and 355 are disulfide-linked.

The protein belongs to the small leucine-rich proteoglycan (SLRP) family. SLRP class I subfamily. Homodimer. Forms a ternary complex with MFAP2 and ELN. In terms of processing, the two attached glycosaminoglycan chains can be either chondroitin sulfate or dermatan sulfate. Found in several connective tissues, especially in articular cartilages.

It is found in the secreted. Its subcellular location is the extracellular space. The protein localises to the extracellular matrix. Functionally, may be involved in collagen fiber assembly. The polypeptide is Biglycan (Bgn) (Rattus norvegicus (Rat)).